The sequence spans 326 residues: Phosphate acyltransferase (326 aa).

This sequence belongs to the PlsX family. In terms of assembly, homodimer. Probably interacts with PlsY.

It localises to the cytoplasm. It carries out the reaction a fatty acyl-[ACP] + phosphate = an acyl phosphate + holo-[ACP]. Its pathway is lipid metabolism; phospholipid metabolism. In terms of biological role, catalyzes the reversible formation of acyl-phosphate (acyl-PO(4)) from acyl-[acyl-carrier-protein] (acyl-ACP). This enzyme utilizes acyl-ACP as fatty acyl donor, but not acyl-CoA. In Thermus thermophilus (strain ATCC BAA-163 / DSM 7039 / HB27), this protein is Phosphate acyltransferase.